The following is a 508-amino-acid chain: ATP synthase subunit alpha, mitochondrial (508 aa).

Residue 171-178 coordinates ATP; that stretch reads GDRQTGKT.

Belongs to the ATPase alpha/beta chains family. As to quaternary structure, F-type ATPases have 2 components, CF(1) - the catalytic core - and CF(0) - the membrane proton channel. CF(1) has five subunits: alpha(3), beta(3), gamma(1), delta(1), epsilon(1). CF(0) has three main subunits: a, b and c.

Its subcellular location is the mitochondrion. The protein localises to the mitochondrion inner membrane. Functionally, mitochondrial membrane ATP synthase (F(1)F(0) ATP synthase or Complex V) produces ATP from ADP in the presence of a proton gradient across the membrane which is generated by electron transport complexes of the respiratory chain. F-type ATPases consist of two structural domains, F(1) - containing the extramembraneous catalytic core, and F(0) - containing the membrane proton channel, linked together by a central stalk and a peripheral stalk. During catalysis, ATP synthesis in the catalytic domain of F(1) is coupled via a rotary mechanism of the central stalk subunits to proton translocation. Subunits alpha and beta form the catalytic core in F(1). Rotation of the central stalk against the surrounding alpha(3)beta(3) subunits leads to hydrolysis of ATP in three separate catalytic sites on the beta subunits. Subunit alpha does not bear the catalytic high-affinity ATP-binding sites. The chain is ATP synthase subunit alpha, mitochondrial (ATPA) from Phaseolus vulgaris (Kidney bean).